Reading from the N-terminus, the 434-residue chain is (3,5-dihydroxyphenyl)acetyl-CoA 1,2-dioxygenase (434 aa).

Substrate-binding positions include Asp184, Glu190, 223–226 (HPRY), 234–239 (AGINLK), Gly293, 322–324 (IPG), and Gln413.

Belongs to the enoyl-CoA hydratase/isomerase family. In terms of assembly, homohexamer; dimer of trimers.

The enzyme catalyses (3,5-dihydroxyphenyl)acetyl-CoA + O2 = 2-(3,5-dihydroxyphenyl)-2-oxoacetate + CoA + H(+). In terms of biological role, involved in the biosynthesis of the nonproteinogenic amino acid monomer (S)-3,5-dihydroxyphenylglycine (Dpg) responsible of the production of vancomycin and teicoplanin antibiotics. Catalyzes the unusual conversion 3,5-dihydroxyphenylacetyl-CoA (DPA-CoA) to 3,5-dihydroxyphenylglyoxylate. DpgC performed a net four-electron oxidation of the benzylic carbon of DPA-CoA and the hydrolysis of the thioester bond to generate free CoA. It can also use phenylacetyl-CoA (PA-CoA) as substrate. This is (3,5-dihydroxyphenyl)acetyl-CoA 1,2-dioxygenase (dpgC) from Amycolatopsis orientalis (Nocardia orientalis).